A 501-amino-acid chain; its full sequence is MAIPMPTRQLFIDGEWREPILKKRIPIVNPATEEVIGDIPAATTEDVDVAVNAARRALSRNKGKDWAKAPGAVRAKYLRAIAAKVNERKTDLAKLEALDCGKPLDEAVWDMDDVAGCFEFYADLAEGLDAKQKAPVSLPMESFKSYVLKQPLGVVGLITPWNYPLLMAVWKVAPSLAAGCTAILKPSELASVTCLELADICREVGLPPGVLNVLTGFGSEAGAPLASHPGVDKIAFTGSFATGSKVMTAAAQLVKPVSMELGGKSPLIVFDDVDLDKAAEWALFGCFWTNGQICSATSRLLVHESIASEFIEKLVKWSKNIKISDPMEEGCRLGPVVSKGQYEKILKFISTAKSEGATILHGGSRPEHLEKGFFIEPTIITDVTTSMQIWREEVFGPVLCVKTFASEDEAIELANDSHYGLGAAVISNDTERCDRISEAFEAGIVWINCSQPCFTQAPWGGVKRSGFGRELGEWGLDNYLSVKQVTLYTSNDPWGWYKSPN.

Na(+) is bound by residues Asp-99 and Leu-189. NAD(+) contacts are provided by residues 238-243 (GSFATG) and 238-245 (GSFATGSK). Glu-260 acts as the Proton acceptor in catalysis. Positions 294 and 393 each coordinate NAD(+). Cys-294 acts as the Nucleophile in catalysis.

It belongs to the aldehyde dehydrogenase family. As to quaternary structure, homodimer. Widely expressed.

The protein localises to the cytoplasm. It localises to the plastid. The protein resides in the chloroplast. It carries out the reaction 4-aminobutanal + NAD(+) + H2O = 4-aminobutanoate + NADH + 2 H(+). The catalysed reaction is 3-aminopropanal + NAD(+) + H2O = beta-alanine + NADH + 2 H(+). The enzyme catalyses 4-(trimethylamino)butanal + NAD(+) + H2O = 4-(trimethylamino)butanoate + NADH + 2 H(+). It catalyses the reaction 4-guanidinobutanal + NAD(+) + H2O = 4-guanidinobutanoate + NADH + 2 H(+). It carries out the reaction betaine aldehyde + NAD(+) + H2O = glycine betaine + NADH + 2 H(+). It participates in amine and polyamine biosynthesis; betaine biosynthesis via choline pathway; betaine from betaine aldehyde: step 1/1. Dehydrogenase that catalyzes the oxidation of several aminoaldehydes. Metabolizes and detoxifies aldehyde products of polyamine degradation to non-toxic amino acids. Catalyzes the oxidation of 4-aminobutanal and 3-aminopropanal to 4-aminobutanoate and beta-alanine, respectively. Production of 4-aminobutinoate by ALDH10A8 may confer tolerance to salt stress. Catalyzes the oxidation of 4-(trimethylamino)butanal and 4-guanidinobutanal to 4-trimethylammoniobutanoate and 4-guanidinobutanoate, respectively. Involved in glycine betaine biosynthesis. Catalyzes with low efficiency the oxidation of betaine aldehyde to glycine betaine. The sequence is that of Aminoaldehyde dehydrogenase ALDH10A8, chloroplastic from Arabidopsis thaliana (Mouse-ear cress).